The sequence spans 91 residues: Dynein 8 kDa light chain, flagellar outer arm (91 aa).

The protein belongs to the dynein light chain family. Consists of at least 3 heavy chains (alpha, beta and gamma), 2 intermediate chains and 8 light chains.

It localises to the cytoplasm. The protein resides in the cytoskeleton. The protein localises to the flagellum axoneme. This is Dynein 8 kDa light chain, flagellar outer arm from Chlamydomonas reinhardtii (Chlamydomonas smithii).